Here is an 894-residue protein sequence, read N- to C-terminus: Translation factor GUF1 homolog, mitochondrial (894 aa).

The interval Glu157–Asp189 is disordered. The span at Ser174–Ser188 shows a compositional bias: low complexity. One can recognise a tr-type G domain in the interval Glu199–Ala376. Residues Ala208–Ser215, Asp269–His273, and Asn323–Asp326 each bind GTP. A disordered region spans residues Asp649–Asp674.

The protein belongs to the TRAFAC class translation factor GTPase superfamily. Classic translation factor GTPase family. LepA subfamily.

It localises to the mitochondrion inner membrane. The enzyme catalyses GTP + H2O = GDP + phosphate + H(+). Its function is as follows. Promotes mitochondrial protein synthesis. May act as a fidelity factor of the translation reaction, by catalyzing a one-codon backward translocation of tRNAs on improperly translocated ribosomes. Binds to mitochondrial ribosomes in a GTP-dependent manner. The sequence is that of Translation factor GUF1 homolog, mitochondrial from Plasmodium knowlesi (strain H).